A 150-amino-acid chain; its full sequence is 3-hydroxyacyl-[acyl-carrier-protein] dehydratase FabZ (150 aa).

Residue His-54 is part of the active site.

This sequence belongs to the thioester dehydratase family. FabZ subfamily.

It localises to the cytoplasm. The enzyme catalyses a (3R)-hydroxyacyl-[ACP] = a (2E)-enoyl-[ACP] + H2O. In terms of biological role, involved in unsaturated fatty acids biosynthesis. Catalyzes the dehydration of short chain beta-hydroxyacyl-ACPs and long chain saturated and unsaturated beta-hydroxyacyl-ACPs. The chain is 3-hydroxyacyl-[acyl-carrier-protein] dehydratase FabZ from Vibrio vulnificus (strain CMCP6).